The following is a 332-amino-acid chain: DnAJ-like protein slr0093 (332 aa).

The 70-residue stretch at 6-75 (FKDYYQILGV…RQKYDQFGRY (70 aa)) folds into the J domain.

The protein is DnAJ-like protein slr0093 of Synechocystis sp. (strain ATCC 27184 / PCC 6803 / Kazusa).